Here is a 428-residue protein sequence, read N- to C-terminus: MGLQAPRGTRDILPAERVYWQYLETIARQILDRAAYREICTPIFEQTPLFERGIGEATDIVSKEMYTFRDRAQRSLTLRPEGTAGVVRAYIEHGLHSQGGVQRLWYLGPMFRYERPQSGRYRQFHQLGVEVLGSADPRADAEVIAVALDILQALGLKQLTLMLNSVGDREDRSAYRQALVDYLTPYKADLDPDSQERLHRNPLRILDSKDPRTQAIVKEAPRLLDYLSARSRAHFEQVQSLLQALGIAYQINPALVRGLDYYTHTAFEFQDMSLGNEGTVCGGGRYDHLVEELGGPPTPAIGWAMGLERLILLLRDRPLPARNQPYLYMVTRGAAAERQGLILAQQLRHQGYTVDVDLSGSAFGKQVKRADRVGATVCLVIGESEATDGTVQVKWLASGEQVLVPQQELLSENWRSRFLTPHDGLLSH.

This sequence belongs to the class-II aminoacyl-tRNA synthetase family. In terms of assembly, homodimer.

It is found in the cytoplasm. It catalyses the reaction tRNA(His) + L-histidine + ATP = L-histidyl-tRNA(His) + AMP + diphosphate + H(+). The sequence is that of Histidine--tRNA ligase from Thermosynechococcus vestitus (strain NIES-2133 / IAM M-273 / BP-1).